The following is a 526-amino-acid chain: Microphthalmia-associated transcription factor (526 aa).

Residues 20-54 (EPKTYYELKSQPLKSSSSAEHSGASKPPLSSSTMT) form a disordered region. The segment covering 34 to 44 (SSSSAEHSGAS) has biased composition (low complexity). The residue at position 180 (serine 180) is a Phosphoserine; by MAPK. Lysine 289 participates in a covalent cross-link: Glycyl lysine isopeptide (Lys-Gly) (interchain with G-Cter in SUMO). Residues 311 to 364 (QKKDNHNLIERRRRFNINDRIKELGTLIPKSNDPDMRWNKGTILKASVDYIRKL) enclose the bHLH domain. Positions 355–401 (KASVDYIRKLQREQQRAKDLENRQKKLEHANRHLLLRVQELEMQARA) form a coiled coil. Residues 374 to 395 (LENRQKKLEHANRHLLLRVQEL) are leucine-zipper. Serine 405 carries the post-translational modification Phosphoserine; by GSK3. Residue serine 414 is modified to Phosphoserine. A Glycyl lysine isopeptide (Lys-Gly) (interchain with G-Cter in SUMO) cross-link involves residue lysine 423. Serine 491 is subject to Phosphoserine. Residues 496 to 526 (TDPLLSSVSPGASKTSSRRSSMSAEETEHAC) are disordered. Over residues 507-519 (ASKTSSRRSSMSA) the composition is skewed to low complexity. Serine 516 carries the phosphoserine; by RPS6KA1 modification.

This sequence belongs to the MiT/TFE family. As to quaternary structure, homodimer or heterodimer; dimerization is mediated via the coiled coil region. Efficient DNA binding requires dimerization with another bHLH protein. Binds DNA in the form of homodimer or heterodimer with either TFE3, TFEB or TFEC. Identified in a complex with HINT1 and CTNNB1. Interacts with KARS1. Interacts with VSX2. Post-translationally, phosphorylation at Ser-405 significantly enhances the ability to bind the tyrosinase promoter. Phosphorylated at Ser-180 and Ser-516 following KIT signaling, triggering a short live activation: Phosphorylation at Ser-180 and Ser-516 by MAPK and RPS6KA1, respectively, activate the transcription factor activity but also promote ubiquitination and subsequent degradation by the proteasome. Phosphorylated in response to blue light (415nm). Ubiquitinated following phosphorylation at Ser-180, leading to subsequent degradation by the proteasome. Deubiquitinated by USP13, preventing its degradation.

The protein localises to the nucleus. Its subcellular location is the cytoplasm. Its function is as follows. Transcription factor that regulates the expression of genes with essential roles in cell differentiation, proliferation and survival. Binds to M-boxes (5'-TCATGTG-3') and symmetrical DNA sequences (E-boxes) (5'-CACGTG-3') found in the promoters of target genes, such as BCL2 and tyrosinase (TYR). Plays an important role in melanocyte development by regulating the expression of tyrosinase (TYR) and tyrosinase-related protein 1 (TYRP1). Plays a critical role in the differentiation of various cell types, such as neural crest-derived melanocytes, mast cells, osteoclasts and optic cup-derived retinal pigment epithelium. In Rattus norvegicus (Rat), this protein is Microphthalmia-associated transcription factor (Mitf).